A 259-amino-acid chain; its full sequence is Thiazole synthase (259 aa).

Catalysis depends on Lys99, which acts as the Schiff-base intermediate with DXP. 1-deoxy-D-xylulose 5-phosphate-binding positions include Gly161, 187–188, and 209–210; these read AG and NT.

Belongs to the ThiG family. In terms of assembly, homotetramer. Forms heterodimers with either ThiH or ThiS.

The protein localises to the cytoplasm. It catalyses the reaction [ThiS sulfur-carrier protein]-C-terminal-Gly-aminoethanethioate + 2-iminoacetate + 1-deoxy-D-xylulose 5-phosphate = [ThiS sulfur-carrier protein]-C-terminal Gly-Gly + 2-[(2R,5Z)-2-carboxy-4-methylthiazol-5(2H)-ylidene]ethyl phosphate + 2 H2O + H(+). It participates in cofactor biosynthesis; thiamine diphosphate biosynthesis. Functionally, catalyzes the rearrangement of 1-deoxy-D-xylulose 5-phosphate (DXP) to produce the thiazole phosphate moiety of thiamine. Sulfur is provided by the thiocarboxylate moiety of the carrier protein ThiS. In vitro, sulfur can be provided by H(2)S. In Sulfurimonas denitrificans (strain ATCC 33889 / DSM 1251) (Thiomicrospira denitrificans (strain ATCC 33889 / DSM 1251)), this protein is Thiazole synthase.